The primary structure comprises 459 residues: Hemopexin (459 aa).

The N-terminal stretch at 1–23 (MARALRVPVALWLLGLCWSLAKA) is a signal peptide. Cystine bridges form between Cys52–Cys232, Cys150–Cys155, and Cys189–Cys201. 4 Hemopexin repeats span residues 55 to 95 (GWGF…WKDA), 96 to 140 (PSPV…FPGI), 141 to 185 (PFPL…SWPA), and 186 to 232 (VGNC…FMSC). Residue His81 coordinates heme. Position 151 (His151) interacts with heme. N-linked (GlcNAc...) asparagine glycosylation is present at Asn188. N-linked (GlcNAc...) asparagine glycosylation is present at Asn218. His237 serves as a coordination point for heme. N-linked (GlcNAc...) asparagine glycosylation occurs at Asn241. Intrachain disulfides connect Cys250/Cys453, Cys359/Cys401, and Cys411/Cys428. Hemopexin repeat units lie at residues 252 to 297 (PHLV…WPQG), 298 to 345 (PSTV…FGSP), 350 to 389 (LHSV…WTEL), and 393 to 444 (HTKV…LPQA). His286 contributes to the heme binding site.

This sequence belongs to the hemopexin family.

Its subcellular location is the secreted. Binds heme and transports it to the liver for breakdown and iron recovery, after which the free hemopexin returns to the circulation. In Bos taurus (Bovine), this protein is Hemopexin (HPX).